Reading from the N-terminus, the 343-residue chain is Phosphoglycerate mutase-like protein 2 (343 aa).

The transit peptide at 1–35 directs the protein to the chloroplast; it reads MIHQSMTSNLSFYISSVSHLSSPLPSLSRLSLRCC. Residue H65 is the Tele-phosphohistidine intermediate of the active site. E177 functions as the Proton donor/acceptor in the catalytic mechanism. Residues 322 to 343 form a disordered region; that stretch reads MTNYPGTILTGEDASSDIADQK.

This sequence belongs to the phosphoglycerate mutase family.

It localises to the plastid. Its subcellular location is the chloroplast. Its function is as follows. May play a role in carbohydrates metabolism. The polypeptide is Phosphoglycerate mutase-like protein 2 (Arabidopsis thaliana (Mouse-ear cress)).